A 158-amino-acid polypeptide reads, in one-letter code: UPAR/Ly6 domain-containing protein crim (158 aa).

Positions 1–22 are cleaved as a signal peptide; that stretch reads MHYHTNLIAALLLAALIHEGSA. The Extracellular portion of the chain corresponds to 23 to 136; that stretch reads IWCYRCTSAT…FCFLDHRCNG (114 aa). Asn-107 carries N-linked (GlcNAc...) asparagine glycosylation. Asn-135 carries GPI-anchor amidated asparagine lipidation. Residues 136–158 constitute a propeptide, removed in mature form; sequence GASGLQTSAVIGLLTLIPALLLR. Residues 137–157 form a helical membrane-spanning segment; that stretch reads ASGLQTSAVIGLLTLIPALLL. Residue Arg-158 is a topological domain, cytoplasmic.

This sequence belongs to the quiver family.

It is found in the membrane. Its function is as follows. Required for septate junction assembly possibly by organizing the preassembly and transport of septate junction proteins. Involved in epithelial cell septate junction-mediated paracellular barrier functions of trachea, hindgut and salivary gland. This is UPAR/Ly6 domain-containing protein crim from Drosophila melanogaster (Fruit fly).